A 501-amino-acid chain; its full sequence is Vitamin D 25-hydroxylase (501 aa).

The N-terminal stretch at 1 to 26 (MWKLWRAEEGAAALGGALFLLLFALG) is a signal peptide. A250 is a binding site for substrate. Position 448 (C448) interacts with heme.

This sequence belongs to the cytochrome P450 family. In terms of assembly, homodimer. Requires heme as cofactor.

The protein localises to the endoplasmic reticulum membrane. Its subcellular location is the microsome membrane. It carries out the reaction calciol + reduced [NADPH--hemoprotein reductase] + O2 = calcidiol + oxidized [NADPH--hemoprotein reductase] + H2O + H(+). The enzyme catalyses vitamin D2 + reduced [NADPH--hemoprotein reductase] + O2 = 25-hydroxyvitamin D2 + oxidized [NADPH--hemoprotein reductase] + H2O + H(+). The catalysed reaction is 1alpha-hydroxyvitamin D2 + reduced [NADPH--hemoprotein reductase] + O2 = 1alpha,25-dihydroxyvitamin D2 + oxidized [NADPH--hemoprotein reductase] + H2O + H(+). It catalyses the reaction alfacalcidol + reduced [NADPH--hemoprotein reductase] + O2 = calcitriol + oxidized [NADPH--hemoprotein reductase] + H2O + H(+). The protein operates within hormone biosynthesis; vitamin D biosynthesis. Its function is as follows. A cytochrome P450 monooxygenase involved in activation of vitamin D precursors. Catalyzes hydroxylation at C-25 of both forms of vitamin D, vitamin D(2) and D(3) (calciol). Can metabolize vitamin D analogs/prodrugs 1alpha-hydroxyvitamin D(2) (doxercalciferol) and 1alpha-hydroxyvitamin D(3) (alfacalcidol) forming 25-hydroxy derivatives. Mechanistically, uses molecular oxygen inserting one oxygen atom into a substrate, and reducing the second into a water molecule, with two electrons provided by NADPH via cytochrome P450 reductase (CPR; NADPH-ferrihemoprotein reductase). This Homo sapiens (Human) protein is Vitamin D 25-hydroxylase (CYP2R1).